Here is a 277-residue protein sequence, read N- to C-terminus: Endochitinase CHI (277 aa).

Residues M1 to S31 form the signal peptide. In terms of domain architecture, Chitin-binding type-1 spans Q32 to S66. 4 cysteine pairs are disulfide-bonded: C34–C42, C36–C48, C41–C55, and C59–C64. A catalytic region spans residues V75 to C277. The Proton donor role is filled by E136. The N-linked (GlcNAc...) asparagine glycan is linked to N274.

The protein belongs to the glycosyl hydrolase 19 family. Chitinase class I subfamily.

It carries out the reaction Random endo-hydrolysis of N-acetyl-beta-D-glucosaminide (1-&gt;4)-beta-linkages in chitin and chitodextrins.. The polypeptide is Endochitinase CHI (Arabidopsis thaliana (Mouse-ear cress)).